A 590-amino-acid polypeptide reads, in one-letter code: Aspartate--tRNA ligase (590 aa).

Glutamate 172 provides a ligand contact to L-aspartate. An aspartate region spans residues 196–199 (QLFK). Arginine 218 contributes to the L-aspartate binding site. Residues 218-220 (RDE) and glutamine 227 each bind ATP. Residue histidine 449 participates in L-aspartate binding. An ATP-binding site is contributed by glutamate 483. Arginine 490 lines the L-aspartate pocket. 535-538 (GLDR) serves as a coordination point for ATP.

This sequence belongs to the class-II aminoacyl-tRNA synthetase family. Type 1 subfamily. As to quaternary structure, homodimer.

The protein localises to the cytoplasm. The enzyme catalyses tRNA(Asp) + L-aspartate + ATP = L-aspartyl-tRNA(Asp) + AMP + diphosphate. Its function is as follows. Catalyzes the attachment of L-aspartate to tRNA(Asp) in a two-step reaction: L-aspartate is first activated by ATP to form Asp-AMP and then transferred to the acceptor end of tRNA(Asp). The sequence is that of Aspartate--tRNA ligase from Mannheimia succiniciproducens (strain KCTC 0769BP / MBEL55E).